A 186-amino-acid chain; its full sequence is Adenine phosphoribosyltransferase (186 aa).

An AMP-binding site is contributed by 132–136 (ATGGS).

It belongs to the purine/pyrimidine phosphoribosyltransferase family. In terms of assembly, homodimer. Mg(2+) is required as a cofactor.

The protein resides in the cytoplasm. It localises to the nucleus. It catalyses the reaction AMP + diphosphate = 5-phospho-alpha-D-ribose 1-diphosphate + adenine. The protein operates within purine metabolism; AMP biosynthesis via salvage pathway; AMP from adenine: step 1/1. In terms of biological role, catalyzes a salvage reaction resulting in the formation of AMP, that is energically less costly than de novo synthesis. In Debaryomyces hansenii (strain ATCC 36239 / CBS 767 / BCRC 21394 / JCM 1990 / NBRC 0083 / IGC 2968) (Yeast), this protein is Adenine phosphoribosyltransferase (APT1).